The primary structure comprises 224 residues: Transmembrane protein C16orf54 (224 aa).

O-linked (GalNAc...) threonine glycosylation occurs at Thr-4. A helical membrane pass occupies residues 32-52 (IPIMLVLATLAALFILTTAVL). 2 disordered regions span residues 104 to 138 (TDRA…SNLG) and 152 to 203 (WGPQ…GLQP). Residues Thr-112 and Thr-116 each carry the phosphothreonine modification. Ser-194 is subject to Phosphoserine.

O-glycosylated with core 1 or possibly core 8 glycans.

It is found in the membrane. The polypeptide is Transmembrane protein C16orf54 (C16orf54) (Homo sapiens (Human)).